We begin with the raw amino-acid sequence, 188 residues long: Elongation factor P-like protein (188 aa).

This sequence belongs to the elongation factor P family.

The polypeptide is Elongation factor P-like protein (Aliivibrio fischeri (strain ATCC 700601 / ES114) (Vibrio fischeri)).